The sequence spans 282 residues: Glutamyl endopeptidase (282 aa).

Residues 1-27 (MKKRFLSICTMTIAALATTTMVNTSYA) form the signal peptide. A propeptide spanning residues 28–66 (KTDTESHNHSSLGTENKNVLDINSSSHNIKPSQNKSYPS) is cleaved from the precursor. Catalysis depends on charge relay system residues histidine 117, aspartate 159, and serine 235.

This sequence belongs to the peptidase S1B family. As to quaternary structure, monomer.

The protein resides in the secreted. It catalyses the reaction Preferential cleavage: Glu-|-Xaa, Asp-|-Xaa.. With respect to regulation, inhibited by diisopropyl fluorophosphate. Functionally, exhibits a significant hydrolytic activity for the carbonyl side of glutamic acid. Shows activity toward human fibronectin and type 1 collagen. The sequence is that of Glutamyl endopeptidase (gseA) from Staphylococcus epidermidis.